The chain runs to 186 residues: MSVVDEETRRKILEDWESNPMRKPRVGKVTVNIGVGESGDRLQKAYELLQELTGQKPVYTRAKQTNPSFGIRRGQPIGVKVDLRREQAIEFLDWTLDAVDRELHESQFDEFGNVCFGLEEHIALEGVEYDPEIGIFGMDIAVTLERPGFRVMRRRRCRRPVPRRHRLTKEEGIVFMEEEFDVEVLP.

The protein belongs to the universal ribosomal protein uL5 family. Part of the 50S ribosomal subunit; contacts the 5S rRNA and probably tRNA. Forms a bridge to the 30S subunit in the 70S ribosome.

Functionally, this is one of the proteins that bind and probably mediate the attachment of the 5S RNA into the large ribosomal subunit, where it forms part of the central protuberance. In the 70S ribosome it contacts protein S13 of the 30S subunit (bridge B1b), connecting the 2 subunits; this bridge is implicated in subunit movement. May contact the P site tRNA; the 5S rRNA and some of its associated proteins might help stabilize positioning of ribosome-bound tRNAs. In Methanopyrus kandleri (strain AV19 / DSM 6324 / JCM 9639 / NBRC 100938), this protein is Large ribosomal subunit protein uL5.